The primary structure comprises 86 residues: Large ribosomal subunit protein bL27 (86 aa).

The segment at Met1–Lys24 is disordered.

It belongs to the bacterial ribosomal protein bL27 family.

This Prochlorococcus marinus (strain MIT 9312) protein is Large ribosomal subunit protein bL27.